The following is a 118-amino-acid chain: Large ribosomal subunit protein bL20 (118 aa).

This sequence belongs to the bacterial ribosomal protein bL20 family.

Binds directly to 23S ribosomal RNA and is necessary for the in vitro assembly process of the 50S ribosomal subunit. It is not involved in the protein synthesizing functions of that subunit. This Pseudomonas syringae pv. syringae (strain B728a) protein is Large ribosomal subunit protein bL20.